The primary structure comprises 170 residues: RNA pyrophosphohydrolase (170 aa).

Positions 8 to 158 constitute a Nudix hydrolase domain; it reads PYRTCVGMML…KRPVYERVVK (151 aa). The short motif at 46-67 is the Nudix box element; sequence GGVDPGEDTWLAAKRELYEETS.

Belongs to the Nudix hydrolase family. RppH subfamily. The cofactor is a divalent metal cation.

Its function is as follows. Accelerates the degradation of transcripts by removing pyrophosphate from the 5'-end of triphosphorylated RNA, leading to a more labile monophosphorylated state that can stimulate subsequent ribonuclease cleavage. The polypeptide is RNA pyrophosphohydrolase (Nitrobacter winogradskyi (strain ATCC 25391 / DSM 10237 / CIP 104748 / NCIMB 11846 / Nb-255)).